The following is a 254-amino-acid chain: Flavin-dependent thymidylate synthase (254 aa).

Positions 7-237 constitute a ThyX domain; it reads LRVQLIARTE…PAVFADFEIY (231 aa). Residues S71, 95–97, and Q103 contribute to the FAD site; that span reads RHR. DUMP contacts are provided by residues 92–95, 103–107, and R176; these read ELIR and QLSQR. Residues 95-105 carry the ThyX motif motif; sequence RHRHFSYSQLS. FAD-binding positions include 192 to 194 and H198; that span reads NYR. R203 contributes to the dUMP binding site. R203 functions as the Involved in ionization of N3 of dUMP, leading to its activation in the catalytic mechanism.

Belongs to the thymidylate synthase ThyX family. Homotetramer. FAD serves as cofactor.

The enzyme catalyses dUMP + (6R)-5,10-methylene-5,6,7,8-tetrahydrofolate + NADPH + H(+) = dTMP + (6S)-5,6,7,8-tetrahydrofolate + NADP(+). The protein operates within pyrimidine metabolism; dTTP biosynthesis. Its function is as follows. Catalyzes the reductive methylation of 2'-deoxyuridine-5'-monophosphate (dUMP) to 2'-deoxythymidine-5'-monophosphate (dTMP) while utilizing 5,10-methylenetetrahydrofolate (mTHF) as the methyl donor, and NADPH and FADH(2) as the reductant. The polypeptide is Flavin-dependent thymidylate synthase (Mycobacterium sp. (strain JLS)).